The primary structure comprises 138 residues: Hexon-interlacing protein (138 aa).

A coiled-coil region spans residues 100–127 (LLVLLAQLEALTQRLGELSKQVAQLREQ).

The protein belongs to the adenoviridae hexon-interlacing protein family. As to quaternary structure, homotrimer. Interacts with hexon protein; this interaction tethers the hexons together. Self-interacts with adjacent proteins. Interacts with kinesin light chain KLC1; this interaction leads to capsid disruption at the nuclear pore complex during virus entry into host cell.

It localises to the virion. The protein localises to the host nucleus. In terms of biological role, structural component of the virion that acts as a cement protein on the capsid exterior and forms triskelion structures consisting of three molecules that stabilize three hexon trimers at the center of each icosahedral facet and fixes the peripentonal hexons. Dispensable for assembly. During virus entry, recruits the anterograde motor kinesin-1 to the capsid docked at the nuclear pore complex thereby subjecting the docked capsid to a pulling force. The resulting tension leads to capsid disruption, dispersion of capsid fragments toward cell periphery and eventually viral DNA entry into the host nucleus. The polypeptide is Hexon-interlacing protein (Human adenovirus B serotype 7 (HAdV-7)).